The following is a 324-amino-acid chain: MKQVNGEKLLASLGDSVKDIRGRLTPDAPMDRVTWFRAGGLAELMFQPHDTDDLIDFLKILPDDVPLTVVGVGSNILVRDGGIPGVVLRLSAKGFGSVELAGENRILAGAICPDKHVAAMAMDNGIGGFHFYYGIPGGIGGAARMNAGANGAETCERVIEVHAVDRKGVKHVLTNDQMGYTYRHSAAADDLIFTHVLFEGYPEDRTKIRAEMDAVRAHRETVQPIREKTGGSTFKNPDGLSAWKLIDEAGCRGLVIGGAQMSSLHCNFMINMEQATGYDLEYLGEQVRREVFEKSGVKLEWEIKRLGGFMPGREVRPFQGVTTE.

The 182-residue stretch at 36-217 (FRAGGLAELM…IRAEMDAVRA (182 aa)) folds into the FAD-binding PCMH-type domain. Arg183 is an active-site residue. The active-site Proton donor is the Ser232. Residue Glu302 is part of the active site.

This sequence belongs to the MurB family. The cofactor is FAD.

The protein localises to the cytoplasm. It carries out the reaction UDP-N-acetyl-alpha-D-muramate + NADP(+) = UDP-N-acetyl-3-O-(1-carboxyvinyl)-alpha-D-glucosamine + NADPH + H(+). The protein operates within cell wall biogenesis; peptidoglycan biosynthesis. Its function is as follows. Cell wall formation. The sequence is that of UDP-N-acetylenolpyruvoylglucosamine reductase from Rhizobium rhizogenes (strain K84 / ATCC BAA-868) (Agrobacterium radiobacter).